We begin with the raw amino-acid sequence, 586 residues long: Cryptochrome-1 (586 aa).

Residues 3 to 132 (VNAVHWFRKG…EVIVRISHTL (130 aa)) form the Photolyase/cryptochrome alpha/beta domain. Lys11 participates in a covalent cross-link: Glycyl lysine isopeptide (Lys-Gly) (interchain with G-Cter in ubiquitin). The short motif at 50 to 54 (NRWRF) is the LIR 1 element. Phosphoserine; by AMPK is present on Ser71. Positions 82–87 (DVFPRL) match the LIR 2 motif. A Glycyl lysine isopeptide (Lys-Gly) (interchain with G-Cter in ubiquitin) cross-link involves residue Lys107. Residues 151 to 156 (KRFQTL) carry the LIR 3 motif. A Glycyl lysine isopeptide (Lys-Gly) (interchain with G-Cter in ubiquitin) cross-link involves residue Lys159. Position 247 is a phosphoserine; by MAPK (Ser247). Ser252 is a binding site for FAD. Short sequence motifs (LIR) lie at residues 255 to 260 (LRFGCL) and 271 to 276 (DLYKKV). Residue Ser280 is modified to Phosphoserine; by AMPK. An LIR 6 motif is present at residues 285–290 (SLYGQL). Gln289 contacts FAD. Residue Lys329 forms a Glycyl lysine isopeptide (Lys-Gly) (interchain with G-Cter in ubiquitin) linkage. An LIR 7 motif is present at residues 335–339 (TGFPW). FAD is bound at residue His355. Positions 371–470 (WISWEEGMKV…LIGINYPKPM (100 aa)) are required for inhibition of CLOCK-BMAL1-mediated transcription. Positions 379–384 (KVFEEL) match the LIR 8 motif. 387–389 (DAD) contributes to the FAD binding site. 3 short sequence motifs (LIR) span residues 395-400 (GSWMWL), 411-416 (HCYCPV), and 430-435 (RRYLPV). Residues 471-493 (VNHAEASRLNIERMKQIYQQLSR) are interaction with TIMELESS. Residue Lys485 forms a Glycyl lysine isopeptide (Lys-Gly) (interchain with G-Cter in ubiquitin) linkage. 2 short sequence motifs (LIR) span residues 486-491 (QIYQQL) and 492-497 (SRYRGL). Residues 545–559 (QQTHLLKQGRSSMGT) show a composition bias toward polar residues. A disordered region spans residues 545-586 (QQTHLLKQGRSSMGTGLSGGKRPSQEEDTQSIGPKVQRQSTN). Lys565 is covalently cross-linked (Glycyl lysine isopeptide (Lys-Gly) (interchain with G-Cter in ubiquitin)). At Ser568 the chain carries Phosphoserine.

This sequence belongs to the DNA photolyase class-1 family. As to quaternary structure, component of the circadian core oscillator, which includes the CRY proteins, CLOCK or NPAS2, BMAL1 or BMAL2, CSNK1D and/or CSNK1E, TIMELESS, and the PER proteins. Interacts directly with TIMELESS. Interacts directly with PER1, PER2 and PER3; interaction with PER2 inhibits its ubiquitination and vice versa. Interacts with FBXL21. Interacts with FBXL3. Interacts with CLOCK-BMAL1 independently of PER2 and DNA. Interacts with HDAC1, HDAC2 and SIN3B. Interacts with nuclear receptors AR, NR1D1, NR3C1/GR, RORA and RORC; the interaction with at least NR3C1/GR is ligand dependent. Interacts with PRKDC. Interacts with the G protein subunit alpha GNAS; the interaction may block GPCR-mediated regulation of cAMP concentrations. Interacts with PRMT5. Interacts with EZH2. Interacts with MYBBP1A, DOCK7, HNRNPU, RPL7A, RPL8 and RPS3. Interacts with PPP5C (via TPR repeats). Interacts with MAP1LC3B. Interacts with CLOCK. Interacts with BMAL1. Interacts weakly with HDAC3; this interaction is enhanced in the presence of FBXL3. Interacts with TRIM28, KCTD5 and DDB1. Interacts with FOXO1. Interacts with DTL and DDB1-CUL4A complex. Interacts with HNF4A. Interacts with PSMD2 in a KDM8-dependent manner. Interacts with KDM8 in a FBXL3-dependent manner. Interacts with PPARG in a ligand-dependent manner. Interacts with PPARD (via domain NR LBD) and NR1I2 (via domain NR LBD) in a ligand-dependent manner. Interacts with PPARA, NR1I3 and VDR. FAD is required as a cofactor. The cofactor is (6R)-5,10-methylene-5,6,7,8-tetrahydrofolate. In terms of processing, phosphorylation on Ser-247 by MAPK is important for the inhibition of CLOCK-BMAL1-mediated transcriptional activity. Phosphorylation by CSNK1E requires interaction with PER1 or PER2. Phosphorylation at Ser-71 and Ser-280 by AMPK decreases protein stability. Phosphorylation at Ser-568 exhibits a robust circadian rhythm with a peak at CT8, increases protein stability, prevents SCF(FBXL3)-mediated degradation and is antagonized by interaction with PRKDC. Post-translationally, ubiquitinated by the SCF(FBXL3) and SCF(FBXL21) complexes, regulating the balance between degradation and stabilization. The SCF(FBXL3) complex is mainly nuclear and mediates ubiquitination and subsequent degradation of CRY1. In contrast, cytoplasmic SCF(FBXL21) complex-mediated ubiquitination leads to stabilize CRY1 and counteract the activity of the SCF(FBXL3) complex. The SCF(FBXL3) and SCF(FBXL21) complexes probably mediate ubiquitination at different Lys residues. Ubiquitination at Lys-11 and Lys-107 are specifically ubiquitinated by the SCF(FBXL21) complex but not by the SCF(FBXL3) complex. Ubiquitination may be inhibited by PER2. Deubiquitinated by USP7. Undergoes autophagy-mediated degradation in the liver in a time-dependent manner. Autophagic degradation of CRY1 (an inhibitor of gluconeogenesis) occurs during periods of reduced feeding allowing induction of gluconeogenesis and maintenance of blood glucose levels.

Its subcellular location is the cytoplasm. The protein resides in the nucleus. Functionally, transcriptional repressor which forms a core component of the circadian clock. The circadian clock, an internal time-keeping system, regulates various physiological processes through the generation of approximately 24 hour circadian rhythms in gene expression, which are translated into rhythms in metabolism and behavior. It is derived from the Latin roots 'circa' (about) and 'diem' (day) and acts as an important regulator of a wide array of physiological functions including metabolism, sleep, body temperature, blood pressure, endocrine, immune, cardiovascular, and renal function. Consists of two major components: the central clock, residing in the suprachiasmatic nucleus (SCN) of the brain, and the peripheral clocks that are present in nearly every tissue and organ system. Both the central and peripheral clocks can be reset by environmental cues, also known as Zeitgebers (German for 'timegivers'). The predominant Zeitgeber for the central clock is light, which is sensed by retina and signals directly to the SCN. The central clock entrains the peripheral clocks through neuronal and hormonal signals, body temperature and feeding-related cues, aligning all clocks with the external light/dark cycle. Circadian rhythms allow an organism to achieve temporal homeostasis with its environment at the molecular level by regulating gene expression to create a peak of protein expression once every 24 hours to control when a particular physiological process is most active with respect to the solar day. Transcription and translation of core clock components (CLOCK, NPAS2, BMAL1, BMAL2, PER1, PER2, PER3, CRY1 and CRY2) plays a critical role in rhythm generation, whereas delays imposed by post-translational modifications (PTMs) are important for determining the period (tau) of the rhythms (tau refers to the period of a rhythm and is the length, in time, of one complete cycle). A diurnal rhythm is synchronized with the day/night cycle, while the ultradian and infradian rhythms have a period shorter and longer than 24 hours, respectively. Disruptions in the circadian rhythms contribute to the pathology of cardiovascular diseases, cancer, metabolic syndromes and aging. A transcription/translation feedback loop (TTFL) forms the core of the molecular circadian clock mechanism. Transcription factors, CLOCK or NPAS2 and BMAL1 or BMAL2, form the positive limb of the feedback loop, act in the form of a heterodimer and activate the transcription of core clock genes and clock-controlled genes (involved in key metabolic processes), harboring E-box elements (5'-CACGTG-3') within their promoters. The core clock genes: PER1/2/3 and CRY1/2 which are transcriptional repressors form the negative limb of the feedback loop and interact with the CLOCK|NPAS2-BMAL1|BMAL2 heterodimer inhibiting its activity and thereby negatively regulating their own expression. This heterodimer also activates nuclear receptors NR1D1/2 and RORA/B/G, which form a second feedback loop and which activate and repress BMAL1 transcription, respectively. CRY1 and CRY2 have redundant functions but also differential and selective contributions at least in defining the pace of the SCN circadian clock and its circadian transcriptional outputs. More potent transcriptional repressor in cerebellum and liver than CRY2, though more effective in lengthening the period of the SCN oscillator. On its side, CRY2 seems to play a critical role in tuning SCN circadian period by opposing the action of CRY1. With CRY2, is dispensable for circadian rhythm generation but necessary for the development of intercellular networks for rhythm synchrony. Capable of translocating circadian clock core proteins such as PER proteins to the nucleus. Interacts with CLOCK-BMAL1 independently of PER proteins and is found at CLOCK-BMAL1-bound sites, suggesting that CRY may act as a molecular gatekeeper to maintainCLOCK-BMAL1 in a poised and repressed state until the proper time for transcriptional activation. Represses the CLOCK-BMAL1 induced transcription of BHLHE40/DEC1, ATF4, MTA1, KLF10 and NAMPT. May repress circadian target genes expression in collaboration with HDAC1 and HDAC2 through histone deacetylation. Mediates the clock-control activation of ATR and modulates ATR-mediated DNA damage checkpoint. In liver, mediates circadian regulation of cAMP signaling and gluconeogenesis by binding to membrane-coupled G proteins and blocking glucagon-mediated increases in intracellular cAMP concentrations and CREB1 phosphorylation. Inhibits hepatic gluconeogenesis by decreasing nuclear FOXO1 levels that down-regulates gluconeogenic gene expression. Besides its role in the maintenance of the circadian clock, is also involved in the regulation of other processes. Represses glucocorticoid receptor NR3C1/GR-induced transcriptional activity by binding to glucocorticoid response elements (GREs). Plays a key role in glucose and lipid metabolism modulation, in part, through the transcriptional regulation of genes involved in these pathways, such as LEP or ACSL4. Represses PPARD and its target genes in the skeletal muscle and limits exercise capacity. Plays an essential role in the generation of circadian rhythms in the retina. Represses the transcriptional activity of NR1I2. The polypeptide is Cryptochrome-1 (CRY1) (Macaca fascicularis (Crab-eating macaque)).